We begin with the raw amino-acid sequence, 345 residues long: Dimethyladenosine transferase 1, mitochondrial (345 aa).

Residues 1-27 (MAASGKLGTFRLPPLPTIREIIKLFGL) constitute a mitochondrion transit peptide. S-adenosyl-L-methionine contacts are provided by residues 35 to 38 (QNFL), asparagine 36, leucine 38, glycine 63, glutamate 85, aspartate 111, and asparagine 141.

This sequence belongs to the class I-like SAM-binding methyltransferase superfamily. rRNA adenine N(6)-methyltransferase family. KsgA subfamily. In terms of assembly, interacts with mitochondrial RNA polymerase POLRMT. Interacts with TFAM.

It localises to the mitochondrion. Its function is as follows. S-adenosyl-L-methionine-dependent methyltransferase which specifically dimethylates mitochondrial 12S rRNA at the conserved stem loop. Also required for basal transcription of mitochondrial DNA, probably via its interaction with POLRMT and TFAM. Stimulates transcription independently of the methyltransferase activity. The sequence is that of Dimethyladenosine transferase 1, mitochondrial (Tfb1m) from Rattus norvegicus (Rat).